The primary structure comprises 407 residues: [Pyruvate dehydrogenase (acetyl-transferring)] kinase isozyme 2, mitochondrial (407 aa).

The 230-residue stretch at 135–364 (LEYKDTYGDD…DAVIYLKALS (230 aa)) folds into the Histidine kinase domain. Y215 and Y216 each carry phosphotyrosine. Residues 251–258 (ELFKNAMR), D290, 309–310 (ST), and 325–330 (GFGYGL) contribute to the ATP site. K376 carries the N6-succinyllysine modification.

It belongs to the PDK/BCKDK protein kinase family. In terms of assembly, homodimer, and heterodimer with PDK1. Interacts with the pyruvate dehydrogenase complex subunit DLAT, and is part of the multimeric pyruvate dehydrogenase complex that contains multiple copies of pyruvate dehydrogenase (E1), dihydrolipoamide acetyltransferase (DLAT, E2) and lipoamide dehydrogenase (DLD, E3). In terms of tissue distribution, expressed in many tissues, with the highest level in heart and skeletal muscle, intermediate levels in brain, kidney, pancreas and liver, and low levels in placenta and lung.

It is found in the mitochondrion matrix. The enzyme catalyses L-seryl-[pyruvate dehydrogenase E1 alpha subunit] + ATP = O-phospho-L-seryl-[pyruvate dehydrogenase E1 alpha subunit] + ADP + H(+). Activity is enhanced by binding to the pyruvate dehydrogenase subunit DLAT. Inhibited by ADP and pyruvate; these compounds interfere with DLAT binding and thereby inhibit kinase activity. Inhibited by dichloroacetate. Inhibited by AZD7545; this compound interferes with DLAT binding and thereby inhibits kinase activity. Its function is as follows. Kinase that plays a key role in the regulation of glucose and fatty acid metabolism and homeostasis via phosphorylation of the pyruvate dehydrogenase subunits PDHA1 and PDHA2. This inhibits pyruvate dehydrogenase activity, and thereby regulates metabolite flux through the tricarboxylic acid cycle, down-regulates aerobic respiration and inhibits the formation of acetyl-coenzyme A from pyruvate. Inhibition of pyruvate dehydrogenase decreases glucose utilization and increases fat metabolism. Mediates cellular responses to insulin. Plays an important role in maintaining normal blood glucose levels and in metabolic adaptation to nutrient availability. Via its regulation of pyruvate dehydrogenase activity, plays an important role in maintaining normal blood pH and in preventing the accumulation of ketone bodies under starvation. Plays a role in the regulation of cell proliferation and in resistance to apoptosis under oxidative stress. Plays a role in p53/TP53-mediated apoptosis. In Homo sapiens (Human), this protein is [Pyruvate dehydrogenase (acetyl-transferring)] kinase isozyme 2, mitochondrial (PDK2).